The following is a 237-amino-acid chain: Ribosomal RNA small subunit methyltransferase G (237 aa).

S-adenosyl-L-methionine-binding positions include G79, 130 to 131, and R147; that span reads CE.

It belongs to the methyltransferase superfamily. RNA methyltransferase RsmG family.

It localises to the cytoplasm. Functionally, specifically methylates the N7 position of a guanine in 16S rRNA. This chain is Ribosomal RNA small subunit methyltransferase G, found in Malacoplasma penetrans (strain HF-2) (Mycoplasma penetrans).